A 309-amino-acid chain; its full sequence is Bombesin receptor-activated protein C6orf89 homolog (309 aa).

The Cytoplasmic segment spans residues 1 to 59; it reads MGSSLSEPCIYDKLSESIDILRQSGYRYGMSEREIEKFIKQVLETNEPRREPPQFPILR. Residues 60–80 form a helical membrane-spanning segment; sequence ATVKFVVAVGVVLMAVLVFTY. The Extracellular portion of the chain corresponds to 81 to 309; the sequence is PQSPVLMGSV…QDVQCDSAVL (229 aa).

In terms of assembly, homodimer.

The protein resides in the golgi apparatus membrane. It localises to the cytoplasm. Exhibits histone deacetylase (HDAC) enhancer properties. May play a role in progression through the cell cycle. The protein is Bombesin receptor-activated protein C6orf89 homolog of Danio rerio (Zebrafish).